A 257-amino-acid chain; its full sequence is Putative hydro-lyase YcsI (257 aa).

The protein belongs to the D-glutamate cyclase family.

The chain is Putative hydro-lyase YcsI (ycsI) from Bacillus subtilis (strain 168).